The primary structure comprises 287 residues: Bifunctional protein FolD (287 aa).

NADP(+)-binding positions include 168–170 (GRS), serine 193, and isoleucine 234.

The protein belongs to the tetrahydrofolate dehydrogenase/cyclohydrolase family. As to quaternary structure, homodimer.

The enzyme catalyses (6R)-5,10-methylene-5,6,7,8-tetrahydrofolate + NADP(+) = (6R)-5,10-methenyltetrahydrofolate + NADPH. It catalyses the reaction (6R)-5,10-methenyltetrahydrofolate + H2O = (6R)-10-formyltetrahydrofolate + H(+). Its pathway is one-carbon metabolism; tetrahydrofolate interconversion. Functionally, catalyzes the oxidation of 5,10-methylenetetrahydrofolate to 5,10-methenyltetrahydrofolate and then the hydrolysis of 5,10-methenyltetrahydrofolate to 10-formyltetrahydrofolate. The polypeptide is Bifunctional protein FolD (Clostridioides difficile (strain 630) (Peptoclostridium difficile)).